We begin with the raw amino-acid sequence, 94 residues long: Large ribosomal subunit protein uL24c (94 aa).

The protein belongs to the universal ribosomal protein uL24 family. Part of the 50S ribosomal subunit.

The protein localises to the plastid. The protein resides in the chloroplast. Functionally, one of two assembly initiator proteins, it binds directly to the 5'-end of the 23S rRNA, where it nucleates assembly of the 50S subunit. The sequence is that of Large ribosomal subunit protein uL24c (rpl24) from Cyanidium caldarium (Red alga).